A 423-amino-acid chain; its full sequence is Adenylosuccinate synthetase (423 aa).

Residues 12–18 and 40–42 contribute to the GTP site; these read GDEGKGK and GHT. Residue aspartate 13 is the Proton acceptor of the active site. Mg(2+)-binding residues include aspartate 13 and glycine 40. IMP contacts are provided by residues 13 to 16, 38 to 41, threonine 129, arginine 143, glutamine 224, threonine 239, and arginine 303; these read DEGK and NAGH. Catalysis depends on histidine 41, which acts as the Proton donor. Position 299-305 (299-305) interacts with substrate; that stretch reads SVTGRQR. Residues arginine 305, 331–333, and 412–414 contribute to the GTP site; these read KGD and SVG.

Belongs to the adenylosuccinate synthetase family. As to quaternary structure, homodimer. Mg(2+) serves as cofactor.

The protein localises to the cytoplasm. The enzyme catalyses IMP + L-aspartate + GTP = N(6)-(1,2-dicarboxyethyl)-AMP + GDP + phosphate + 2 H(+). Its pathway is purine metabolism; AMP biosynthesis via de novo pathway; AMP from IMP: step 1/2. In terms of biological role, plays an important role in the de novo pathway of purine nucleotide biosynthesis. Catalyzes the first committed step in the biosynthesis of AMP from IMP. This chain is Adenylosuccinate synthetase, found in Flavobacterium psychrophilum (strain ATCC 49511 / DSM 21280 / CIP 103535 / JIP02/86).